The sequence spans 109 residues: Parvalbumin-7 (109 aa).

N-acetylalanine is present on A2. 2 EF-hand domains span residues 39–74 (LSAD…FSAD) and 78–109 (LTDK…LVHE). Positions 52, 54, 56, 58, 60, 63, 91, 93, 95, 97, and 102 each coordinate Ca(2+).

This sequence belongs to the parvalbumin family.

In muscle, parvalbumin is thought to be involved in relaxation after contraction. It binds two calcium ions. The chain is Parvalbumin-7 (pvalb7) from Danio rerio (Zebrafish).